The primary structure comprises 156 residues: Large ribosomal subunit protein uL22 (156 aa).

Belongs to the universal ribosomal protein uL22 family. Part of the 50S ribosomal subunit.

In terms of biological role, this protein binds specifically to 23S rRNA. It makes multiple contacts with different domains of the 23S rRNA in the assembled 50S subunit and ribosome. The globular domain of the protein is located near the polypeptide exit tunnel on the outside of the subunit, while an extended beta-hairpin is found that lines the wall of the exit tunnel in the center of the 70S ribosome. The protein is Large ribosomal subunit protein uL22 of Sulfurisphaera tokodaii (strain DSM 16993 / JCM 10545 / NBRC 100140 / 7) (Sulfolobus tokodaii).